The chain runs to 209 residues: Kynurenine formamidase (209 aa).

Residue Trp-20 participates in substrate binding. Residues His-50, His-54, and Asp-56 each contribute to the Zn(2+) site. Catalysis depends on His-60, which acts as the Proton donor/acceptor. Residues His-161 and Glu-173 each coordinate Zn(2+).

The protein belongs to the Cyclase 1 superfamily. KynB family. As to quaternary structure, homodimer. Zn(2+) is required as a cofactor.

It catalyses the reaction N-formyl-L-kynurenine + H2O = L-kynurenine + formate + H(+). Its pathway is amino-acid degradation; L-tryptophan degradation via kynurenine pathway; L-kynurenine from L-tryptophan: step 2/2. Catalyzes the hydrolysis of N-formyl-L-kynurenine to L-kynurenine, the second step in the kynurenine pathway of tryptophan degradation. The protein is Kynurenine formamidase of Bacillus cereus (strain ZK / E33L).